The sequence spans 339 residues: N-acetyl-gamma-glutamyl-phosphate reductase 1 (339 aa).

Residue Cys-149 is part of the active site.

The protein belongs to the NAGSA dehydrogenase family. Type 1 subfamily.

The protein resides in the cytoplasm. It carries out the reaction N-acetyl-L-glutamate 5-semialdehyde + phosphate + NADP(+) = N-acetyl-L-glutamyl 5-phosphate + NADPH + H(+). The protein operates within amino-acid biosynthesis; L-arginine biosynthesis; N(2)-acetyl-L-ornithine from L-glutamate: step 3/4. Its function is as follows. Catalyzes the NADPH-dependent reduction of N-acetyl-5-glutamyl phosphate to yield N-acetyl-L-glutamate 5-semialdehyde. The chain is N-acetyl-gamma-glutamyl-phosphate reductase 1 from Lactiplantibacillus plantarum (strain ATCC BAA-793 / NCIMB 8826 / WCFS1) (Lactobacillus plantarum).